The primary structure comprises 463 residues: Cysteine--tRNA ligase (463 aa).

Cysteine 33 contacts Zn(2+). A 'HIGH' region motif is present at residues 35 to 45; sequence PTVYDFAHIGN. Zn(2+) contacts are provided by cysteine 221, histidine 246, and glutamate 250. The short motif at 279-283 is the 'KMSKS' region element; sequence KMSKS. ATP is bound at residue lysine 282.

The protein belongs to the class-I aminoacyl-tRNA synthetase family. In terms of assembly, monomer. The cofactor is Zn(2+).

Its subcellular location is the cytoplasm. It catalyses the reaction tRNA(Cys) + L-cysteine + ATP = L-cysteinyl-tRNA(Cys) + AMP + diphosphate. This Rhizobium leguminosarum bv. trifolii (strain WSM2304) protein is Cysteine--tRNA ligase.